Here is a 61-residue protein sequence, read N- to C-terminus: Large ribosomal subunit protein bL32 (61 aa).

The segment covering 1 to 22 (MAVPKKKTSRARRDRRRSHHAL) has biased composition (basic residues). The disordered stretch occupies residues 1–24 (MAVPKKKTSRARRDRRRSHHALRG).

This sequence belongs to the bacterial ribosomal protein bL32 family.

This is Large ribosomal subunit protein bL32 from Rubrobacter xylanophilus (strain DSM 9941 / JCM 11954 / NBRC 16129 / PRD-1).